We begin with the raw amino-acid sequence, 144 residues long: MAVQSKAFCAGGLAPGWKLLVQGHADSGEDRFETNFLLETGDIAFHIKPRFSSATVVGNAFQYGRWGPEQVSSIFPLAPGEPFEIEVSWDAEHFHVYAPEHKVLQFPCRQRPLGATTRVRVLSDHCLAQVELAKRGLSWGDRGY.

The region spanning 5-133 is the Galectin domain; the sequence is SKAFCAGGLA…DHCLAQVELA (129 aa). Phosphoserine is present on serine 138.

Homodimer. As to expression, not detected in lens.

This chain is Grifin (GRIFIN), found in Homo sapiens (Human).